We begin with the raw amino-acid sequence, 254 residues long: Esterase YbfF (254 aa).

Active-site residues include Ser89 and His234.

It belongs to the DmpD/TodF/XylF esterase family.

Its function is as follows. Displays esterase activity toward palmitoyl-CoA, malonyl-CoA and pNP-butyrate. This chain is Esterase YbfF (ybfF), found in Escherichia coli (strain K12).